The sequence spans 583 residues: Scarecrow-like protein 30 (583 aa).

Disordered stretches follow at residues 107 to 154 (GDLE…RKSK) and 182 to 205 (EATEKKTRHVKGSSNRYKQQKSDQ). The segment covering 115 to 124 (GNFSSITSLH) has biased composition (polar residues). Residues 131–140 (ESTRRYRHRD) show a composition bias toward basic and acidic residues. The 380-residue stretch at 200–579 (QQKSDQPVDM…RVLYAVSCWK (380 aa)) folds into the GRAS domain. The segment at 207-266 (VDMRNLLMQCAQAVASFDQRRAFEKLKEIREHSSRHGDATQRLGYHFAEALEARITGTMT) is leucine repeat I (LRI). The tract at residues 285–350 (YKGFVQACPT…IGPPLLRVTG (66 aa)) is VHIID. The VHIID motif lies at 316 to 320 (LHIID). Residues 366-398 (ETGRRLKRFCDKFNVPFEYSFIAKNWENITLDD) are leucine repeat II (LRII). The interval 407 to 501 (TVVNCILRLQ…RELIIRDAMS (95 aa)) is PFYRE. The tract at residues 504–579 (ACEGSERFAR…RVLYAVSCWK (76 aa)) is SAW.

This sequence belongs to the GRAS family. Interacts with SNRNP35 and CYP95. As to expression, expressed in seedlings, leaves, sepals, stamen and pistil, and in the quiescent center of root meristem.

It is found in the nucleus. Functionally, probable transcription factor involved in plant development. The chain is Scarecrow-like protein 30 (SCL30) from Arabidopsis thaliana (Mouse-ear cress).